The chain runs to 710 residues: MTENEGNDKKIEGSNPKKKLNVVTFTGAAGLLGLAVSFAIFTFKSHKQKSKKKGLPGCDTVCVNLSAKEILDLAEEIIHKSTRVHDAVALVSLDKLSYENVVLPLAELEARQLSLIQCCVFPKMLSPHDNVRKASTEAEQKIDAHILSCRKREDVYRIIKIYAAKGESISPEAKCYLQCLVRDFEDNGLNLTAIKREEVERLKYEIDELSLRYIQNLNEDSSCLFFTEDELAGLPLEFLQNLEKTQNKEFKLTLESRHVAAILELCKIAKTRKTVAMAYGKRCGDTNIPVLQRLVQSRHRLACVCGYAHFADYALDRRMSKTSMRVIRFLEDISSSLTDLAIREFSILEDLKRKEEGEIPFGVEDLLYYIKRVEELQFDLDFGDIRQYFPVNLVLSGIFKICQDLFGIKFEEVTEVDVWYHDIRAFAVFDSGSGKLLGYFYLDMFTREGKCNHSCVVALQNNALFSNGACQIPVALLIAQFAKDGSGEAVPLGFSDVVNLFHEFGHVVQHICNRASFARFSGLRVDPDFREIPSQLLENWCYESFTLKLISGYRQDITKPLVDEVCKTLKRWRYSFSALKSLQEILYCLFDQIIYSDDDADLLQLIRSLHPKVMIGLPVVEGTNPASCFPRAVIGSEATCYSRLWSEVYAADIFASKFGDGHPNLYAGLQFRDKVLAPGGGKEPMELLTNFLGREPSTQAFIASRTNYSL.

H502 lines the Zn(2+) pocket. E503 is a catalytic residue. A Zn(2+)-binding site is contributed by H506.

Belongs to the peptidase M3 family. Requires Zn(2+) as cofactor.

It is found in the cytoplasm. The catalysed reaction is Preferential cleavage of bonds with hydrophobic residues at P1, P2 and P3' and a small residue at P1' in substrates of 5 to 15 residues.. Its function is as follows. Involved in cytoplasmic peptide degradation. The chain is Probable thimet oligopeptidase from Arabidopsis thaliana (Mouse-ear cress).